The primary structure comprises 261 residues: Cytochrome c oxidase subunit 3 (261 aa).

Over 1–15 (MAHQSHAYHMVKPSP) the chain is Mitochondrial matrix. Residues 16 to 34 (WPLTGALSALLTTSGLTMW) form a helical membrane-spanning segment. The Mitochondrial intermembrane portion of the chain corresponds to 35–40 (FHFHST). Residues 41 to 66 (TLLLTGLLTNALTMYQWWRDVVREST) traverse the membrane as a helical segment. Over 67 to 72 (YQGHHT) the chain is Mitochondrial matrix. Residues 73 to 105 (LPVQKGLRYGMILFITSEVFFFAGFFWAFYHSS) form a helical membrane-spanning segment. Residues 106–128 (LAPTPQLGGHWPPTGIIPLNPLE) lie on the Mitochondrial intermembrane side of the membrane. A helical transmembrane segment spans residues 129–152 (VPLLNTSVLLASGVSITWAHHSLM). The Mitochondrial matrix portion of the chain corresponds to 153–155 (ENN). A helical membrane pass occupies residues 156-183 (RTQMIQALLITILLGIYFTLLQASEYIE). The Mitochondrial intermembrane segment spans residues 184-190 (APFTISD). Residues 191–223 (GIYGSTFFMATGFHGLHVIIGSTFLTVCLARQL) traverse the membrane as a helical segment. Topologically, residues 224–232 (LFHFTSKHH) are mitochondrial matrix. A helical membrane pass occupies residues 233 to 256 (FGFEAAAWYWHFVDVVWLFLYVSI). At 257 to 261 (YWWGS) the chain is on the mitochondrial intermembrane side.

This sequence belongs to the cytochrome c oxidase subunit 3 family. In terms of assembly, component of the cytochrome c oxidase (complex IV, CIV), a multisubunit enzyme composed of 14 subunits. The complex is composed of a catalytic core of 3 subunits MT-CO1, MT-CO2 and MT-CO3, encoded in the mitochondrial DNA, and 11 supernumerary subunits COX4I, COX5A, COX5B, COX6A, COX6B, COX6C, COX7A, COX7B, COX7C, COX8 and NDUFA4, which are encoded in the nuclear genome. The complex exists as a monomer or a dimer and forms supercomplexes (SCs) in the inner mitochondrial membrane with NADH-ubiquinone oxidoreductase (complex I, CI) and ubiquinol-cytochrome c oxidoreductase (cytochrome b-c1 complex, complex III, CIII), resulting in different assemblies (supercomplex SCI(1)III(2)IV(1) and megacomplex MCI(2)III(2)IV(2)).

It localises to the mitochondrion inner membrane. It catalyses the reaction 4 Fe(II)-[cytochrome c] + O2 + 8 H(+)(in) = 4 Fe(III)-[cytochrome c] + 2 H2O + 4 H(+)(out). In terms of biological role, component of the cytochrome c oxidase, the last enzyme in the mitochondrial electron transport chain which drives oxidative phosphorylation. The respiratory chain contains 3 multisubunit complexes succinate dehydrogenase (complex II, CII), ubiquinol-cytochrome c oxidoreductase (cytochrome b-c1 complex, complex III, CIII) and cytochrome c oxidase (complex IV, CIV), that cooperate to transfer electrons derived from NADH and succinate to molecular oxygen, creating an electrochemical gradient over the inner membrane that drives transmembrane transport and the ATP synthase. Cytochrome c oxidase is the component of the respiratory chain that catalyzes the reduction of oxygen to water. Electrons originating from reduced cytochrome c in the intermembrane space (IMS) are transferred via the dinuclear copper A center (CU(A)) of subunit 2 and heme A of subunit 1 to the active site in subunit 1, a binuclear center (BNC) formed by heme A3 and copper B (CU(B)). The BNC reduces molecular oxygen to 2 water molecules using 4 electrons from cytochrome c in the IMS and 4 protons from the mitochondrial matrix. The chain is Cytochrome c oxidase subunit 3 (MT-CO3) from Pongo abelii (Sumatran orangutan).